The chain runs to 473 residues: Protein AUXIN RESPONSE 4 (473 aa).

Residues 1–10 (MAIITEEEED) are compositionally biased toward acidic residues. The disordered stretch occupies residues 1–38 (MAIITEEEEDPKTLNPPKNKPKDSDFTKSESTMKNPKP). Positions 29–38 (SESTMKNPKP) are enriched in polar residues. A helical transmembrane segment spans residues 44–64 (FPFWFYFTVVVSLATIIFISL). Residues 119–283 (TVVIVHGLGL…DSSISPALPL (165 aa)) enclose the AB hydrolase-1 domain.

In terms of tissue distribution, most abundant in root tissue, lesser amounts in rosette leaves, stems and flowers and very little in mature siliques.

It localises to the endoplasmic reticulum membrane. In terms of biological role, required for the auxin influx facilitator AUX1 polar trafficking and its asymmetric localization within the plasma membrane. Not involved in the PIN proteins localization. The protein is Protein AUXIN RESPONSE 4 (AXR4) of Arabidopsis thaliana (Mouse-ear cress).